Consider the following 263-residue polypeptide: Oxidoreductase UcpA (263 aa).

Residue Leu10 to Asn32 coordinates NAD(+). Substrate is bound at residue Ser141. The active-site Proton acceptor is Tyr155.

This sequence belongs to the short-chain dehydrogenases/reductases (SDR) family.

This chain is Oxidoreductase UcpA (ucpA), found in Escherichia coli O157:H7.